A 275-amino-acid chain; its full sequence is tRNA (guanine-N(1)-)-methyltransferase (275 aa).

S-adenosyl-L-methionine contacts are provided by residues Gly139 and 159 to 164 (IGDYIL).

This sequence belongs to the RNA methyltransferase TrmD family. Homodimer.

It localises to the cytoplasm. The enzyme catalyses guanosine(37) in tRNA + S-adenosyl-L-methionine = N(1)-methylguanosine(37) in tRNA + S-adenosyl-L-homocysteine + H(+). Its function is as follows. Specifically methylates guanosine-37 in various tRNAs. The sequence is that of tRNA (guanine-N(1)-)-methyltransferase from Lachnoclostridium phytofermentans (strain ATCC 700394 / DSM 18823 / ISDg) (Clostridium phytofermentans).